The primary structure comprises 197 residues: Glycerol-3-phosphate acyltransferase (197 aa).

Transmembrane regions (helical) follow at residues 5–25 (LILI…VGKI), 70–90 (LPVL…AVIG), 111–131 (VMLF…FIVL), and 153–173 (IFFT…AFIF).

It belongs to the PlsY family. In terms of assembly, probably interacts with PlsX.

The protein localises to the cell membrane. It carries out the reaction an acyl phosphate + sn-glycerol 3-phosphate = a 1-acyl-sn-glycero-3-phosphate + phosphate. It functions in the pathway lipid metabolism; phospholipid metabolism. Catalyzes the transfer of an acyl group from acyl-phosphate (acyl-PO(4)) to glycerol-3-phosphate (G3P) to form lysophosphatidic acid (LPA). This enzyme utilizes acyl-phosphate as fatty acyl donor, but not acyl-CoA or acyl-ACP. This Geobacillus sp. (strain WCH70) protein is Glycerol-3-phosphate acyltransferase.